Consider the following 284-residue polypeptide: Stomatin (284 aa).

At 1-31 (MSDKRQSSHVQSQRIPESFRENSKTELGACG) the chain is on the cytoplasmic side. Phosphoserine is present on Ser18. Cys30 is lipidated: S-palmitoyl cysteine. An intramembrane segment occupies 32 to 52 (WILVAASFFFVIITFPISIWI). At 53-284 (CIKIVKEYER…MLQGIMGSNH (232 aa)) the chain is on the cytoplasmic side. Residue Cys87 is the site of S-palmitoyl cysteine attachment. A phosphoserine mark is found at Ser161 and Ser244. The segment at 265-273 (STIVFPLPV) is required for homooligomerization. The tract at residues 267–269 (IVF) is required for lipid raft association. An interaction with LANCL1 region spans residues 273-284 (VDMLQGIMGSNH).

It belongs to the band 7/mec-2 family. In terms of assembly, interacts with LANCL1. Interacts with SLC2A1. Interacts with SLC4A1; this interaction positively regulates SLC4A1 activity. Identified in large complexes with SLC40A1, SLC14A1, SLC29A1 and AQP1. Homodimer and higher order homooligomers. The homodimer is banana-shaped. Interacts with ASIC1, ASIC2 and ASIC3. Interacts with STOML1; may redistribute STOM from the plasma membrane to late endosomes. Expressed in all sensory neurons of the dorsal root ganglia. In the CNS, expressed in many neurons of the spinal cord, medulla and pons. Expressed only in scattered neurons in the cortex, hippocampus, thalamus and basal ganglia. In the cerebellum, expressed in all Purkinje cells (at protein level). Widely expressed with high levels in heart, liver, skeletal muscle and testis and low levels in lung, brain and spleen.

Its subcellular location is the cell membrane. The protein localises to the cytoplasm. It is found in the cytoskeleton. The protein resides in the membrane raft. It localises to the melanosome. Its subcellular location is the cytoplasmic vesicle. Functionally, regulates ion channel activity and transmembrane ion transport. Regulates ASIC2 and ASIC3 channel activity. The sequence is that of Stomatin from Mus musculus (Mouse).